The sequence spans 416 residues: 3-phosphoshikimate 1-carboxyvinyltransferase (416 aa).

Lys20, Ser21, and Arg25 together coordinate 3-phosphoshikimate. Lys20 contributes to the phosphoenolpyruvate binding site. The phosphoenolpyruvate site is built by Gly88 and Arg116. 3-phosphoshikimate-binding residues include Ser159, Ser160, Gln161, Ser186, Asp300, and Lys327. Gln161 is a binding site for phosphoenolpyruvate. Asp300 serves as the catalytic Proton acceptor. Residues Arg331 and Arg373 each coordinate phosphoenolpyruvate.

Belongs to the EPSP synthase family. Monomer.

Its subcellular location is the cytoplasm. The enzyme catalyses 3-phosphoshikimate + phosphoenolpyruvate = 5-O-(1-carboxyvinyl)-3-phosphoshikimate + phosphate. Its pathway is metabolic intermediate biosynthesis; chorismate biosynthesis. Catalyzes the transfer of the enolpyruvyl moiety of phosphoenolpyruvate (PEP) to the 5-hydroxyl of shikimate-3-phosphate (S3P) to produce enolpyruvyl shikimate-3-phosphate and inorganic phosphate. The polypeptide is 3-phosphoshikimate 1-carboxyvinyltransferase (Archaeoglobus fulgidus (strain ATCC 49558 / DSM 4304 / JCM 9628 / NBRC 100126 / VC-16)).